The following is a 258-amino-acid chain: Synaptosomal-associated protein 29 (258 aa).

The segment at 1-41 (MSAYPKSYNPFDDDGEDEGARPAPWRDARDLPDGPDAPADR) is disordered. Basic and acidic residues predominate over residues 18-32 (EGARPAPWRDARDLP). Positions 76–107 (ASSEELARQRGVLERTEKMVDKMDQDLKISQK) form a coiled coil. Residues S77, S78, and S114 each carry the phosphoserine modification. The segment at 127-190 (PVETPPEQNG…GSAVSTDAYP (64 aa)) is disordered. Residues T130 and T137 each carry the phosphothreonine modification. A compositionally biased stretch (polar residues) spans 132 to 144 (PEQNGTLASQPNS). S163, S182, S185, S204, and S210 each carry phosphoserine. One can recognise a t-SNARE coiled-coil homology domain in the interval 196–258 (QAYHQKIDSN…KSTERKVRQL (63 aa)).

Belongs to the SNAP-25 family. As to quaternary structure, forms a SNARE complex, composed of VAMP8, SNAP29 and STX17, involved in fusion of autophagosome with lysosome. Interacts with multiple syntaxins including STX6. Interacts with EIPR1. Interacts with STX17; this interaction is increased in the absence of TMEM39A.

It is found in the cytoplasm. Its subcellular location is the golgi apparatus membrane. It localises to the cytoplasmic vesicle. The protein resides in the autophagosome membrane. The protein localises to the cell projection. It is found in the cilium membrane. In terms of biological role, SNAREs, soluble N-ethylmaleimide-sensitive factor-attachment protein receptors, are essential proteins for fusion of cellular membranes. SNAREs localized on opposing membranes assemble to form a trans-SNARE complex, an extended, parallel four alpha-helical bundle that drives membrane fusion. SNAP29 is a SNARE involved in autophagy through the direct control of autophagosome membrane fusion with the lysososome membrane. Also plays a role in ciliogenesis by regulating membrane fusions. The protein is Synaptosomal-associated protein 29 of Pongo abelii (Sumatran orangutan).